The following is a 501-amino-acid chain: Ribose import ATP-binding protein RbsA (501 aa).

ABC transporter domains are found at residues 5 to 241 (LQLK…VGRK) and 252 to 495 (APGD…VGKL). 37 to 44 (GENGAGKS) provides a ligand contact to ATP.

It belongs to the ABC transporter superfamily. Ribose importer (TC 3.A.1.2.1) family. The complex is composed of an ATP-binding protein (RbsA), two transmembrane proteins (RbsC) and a solute-binding protein (RbsB).

The protein resides in the cell inner membrane. The catalysed reaction is D-ribose(out) + ATP + H2O = D-ribose(in) + ADP + phosphate + H(+). Its function is as follows. Part of the ABC transporter complex RbsABC involved in ribose import. Responsible for energy coupling to the transport system. The polypeptide is Ribose import ATP-binding protein RbsA (Shigella sonnei (strain Ss046)).